The chain runs to 267 residues: Cell division protein FtsQ (267 aa).

Topologically, residues 1-32 (MRKKTSSNKKKQTKKTNNISLRRKLRLIYKKA) are cytoplasmic. Residues 33–53 (ILGLKIALIIFVCLFVFTKYF) traverse the membrane as a helical segment. Topologically, residues 54–267 (AGIKTYLTTN…DKNKYYIEKY (214 aa)) are periplasmic. Residues 73-141 (FKLENVIIEG…NTVYIKLFER (69 aa)) form the POTRA domain.

This sequence belongs to the FtsQ/DivIB family. FtsQ subfamily.

It localises to the cell inner membrane. Essential cell division protein. This is Cell division protein FtsQ from Rickettsia felis (strain ATCC VR-1525 / URRWXCal2) (Rickettsia azadi).